A 208-amino-acid chain; its full sequence is Uracil phosphoribosyltransferase (208 aa).

5-phospho-alpha-D-ribose 1-diphosphate-binding positions include Arg78, Arg103, and 130-138; that span reads DPMLATGVS. Uracil is bound by residues Ile193 and 198-200; that span reads GDA. Asp199 is a 5-phospho-alpha-D-ribose 1-diphosphate binding site.

It belongs to the UPRTase family. Requires Mg(2+) as cofactor.

It catalyses the reaction UMP + diphosphate = 5-phospho-alpha-D-ribose 1-diphosphate + uracil. It participates in pyrimidine metabolism; UMP biosynthesis via salvage pathway; UMP from uracil: step 1/1. Its activity is regulated as follows. Allosterically activated by GTP. Its function is as follows. Catalyzes the conversion of uracil and 5-phospho-alpha-D-ribose 1-diphosphate (PRPP) to UMP and diphosphate. This is Uracil phosphoribosyltransferase from Thermosipho africanus (strain TCF52B).